A 398-amino-acid polypeptide reads, in one-letter code: Protein RecA (398 aa).

Gly83–Thr90 is a binding site for ATP. The interval Ala351–Glu398 is disordered. Basic and acidic residues predominate over residues Lys354 to Ala365. Positions Ser375–Ala389 are enriched in acidic residues.

It belongs to the RecA family.

The protein localises to the cytoplasm. Its function is as follows. Can catalyze the hydrolysis of ATP in the presence of single-stranded DNA, the ATP-dependent uptake of single-stranded DNA by duplex DNA, and the ATP-dependent hybridization of homologous single-stranded DNAs. It interacts with LexA causing its activation and leading to its autocatalytic cleavage. The polypeptide is Protein RecA (Ruminococcus albus (strain ATCC 27210 / DSM 20455 / JCM 14654 / NCDO 2250 / 7)).